A 247-amino-acid polypeptide reads, in one-letter code: Serine protease 1 (247 aa).

The N-terminal stretch at 1-15 is a signal peptide; the sequence is MNPLLILTFVAAALA. Positions 16–23 are cleaved as a propeptide — activation peptide; that stretch reads APFDDDDK. The 221-residue stretch at 24 to 244 folds into the Peptidase S1 domain; that stretch reads IVGGYNCEEN…YVKWIKNTIA (221 aa). Disulfide bonds link Cys30–Cys160, Cys48–Cys64, Cys139–Cys206, Cys171–Cys185, and Cys196–Cys220. His63 (charge relay system) is an active-site residue. The Ca(2+) site is built by Glu75, Asn77, Val80, and Glu85. The Charge relay system role is filled by Asp107. A Sulfotyrosine modification is found at Tyr154. Catalysis depends on Ser200, which acts as the Charge relay system.

It belongs to the peptidase S1 family. Interacts with SERPINA1. Requires Ca(2+) as cofactor. Occurs in a single-chain form and a two-chain form, produced by proteolytic cleavage after Arg-122. Post-translationally, sulfation at Tyr-154 increases selectivity towards basic versus apolar residues at the P2' position of inhibitors that bind in a substrate-like fashion. Although the increase in selectivity is relatively small, it may facilitate digestion of a broader range of dietary proteins.

The protein localises to the secreted. It localises to the extracellular space. It carries out the reaction Preferential cleavage: Arg-|-Xaa, Lys-|-Xaa.. Its function is as follows. Has activity against the synthetic substrates Boc-Phe-Ser-Arg-Mec, Boc-Leu-Thr-Arg-Mec, Boc-Gln-Ala-Arg-Mec and Boc-Val-Pro-Arg-Mec. The single-chain form is more active than the two-chain form against all of these substrates. The protein is Serine protease 1 of Homo sapiens (Human).